The primary structure comprises 22 residues: MRYISLNTTIITTTETTGYGAG.

Belongs to the thr operon leader peptide family.

Its function is as follows. This protein is involved in control of the biosynthesis of threonine. This is thr operon leader peptide from Yersinia pestis bv. Antiqua (strain Antiqua).